Reading from the N-terminus, the 271-residue chain is Formamidopyrimidine-DNA glycosylase (271 aa).

Proline 2 functions as the Schiff-base intermediate with DNA in the catalytic mechanism. Glutamate 3 functions as the Proton donor in the catalytic mechanism. Lysine 58 serves as the catalytic Proton donor; for beta-elimination activity. DNA-binding residues include histidine 91, arginine 110, and arginine 152. The FPG-type zinc-finger motif lies at 237 to 271; sequence SIYGKKGRPCPKCGSAIRMMRLGGRSTFFCPLCQK. Arginine 261 serves as the catalytic Proton donor; for delta-elimination activity.

Belongs to the FPG family. Monomer. Zn(2+) is required as a cofactor.

It catalyses the reaction Hydrolysis of DNA containing ring-opened 7-methylguanine residues, releasing 2,6-diamino-4-hydroxy-5-(N-methyl)formamidopyrimidine.. The catalysed reaction is 2'-deoxyribonucleotide-(2'-deoxyribose 5'-phosphate)-2'-deoxyribonucleotide-DNA = a 3'-end 2'-deoxyribonucleotide-(2,3-dehydro-2,3-deoxyribose 5'-phosphate)-DNA + a 5'-end 5'-phospho-2'-deoxyribonucleoside-DNA + H(+). Functionally, involved in base excision repair of DNA damaged by oxidation or by mutagenic agents. Acts as a DNA glycosylase that recognizes and removes damaged bases. Has a preference for oxidized purines, such as 7,8-dihydro-8-oxoguanine (8-oxoG). Has AP (apurinic/apyrimidinic) lyase activity and introduces nicks in the DNA strand. Cleaves the DNA backbone by beta-delta elimination to generate a single-strand break at the site of the removed base with both 3'- and 5'-phosphates. The polypeptide is Formamidopyrimidine-DNA glycosylase (Geotalea daltonii (strain DSM 22248 / JCM 15807 / FRC-32) (Geobacter daltonii)).